Here is a 351-residue protein sequence, read N- to C-terminus: DNA-directed RNA polymerase subunit alpha (351 aa).

The tract at residues 1–245 is alpha N-terminal domain (alpha-NTD); sequence MPRRNLLKGF…EHFTVFVNFD (245 aa). Positions 261–351 are alpha C-terminal domain (alpha-CTD); that stretch reads AVLELLNTKI…MRQKEEIDEA (91 aa).

Belongs to the RNA polymerase alpha chain family. Homodimer. The RNAP catalytic core consists of 2 alpha, 1 beta, 1 beta' and 1 omega subunit. When a sigma factor is associated with the core the holoenzyme is formed, which can initiate transcription.

The enzyme catalyses RNA(n) + a ribonucleoside 5'-triphosphate = RNA(n+1) + diphosphate. Its function is as follows. DNA-dependent RNA polymerase catalyzes the transcription of DNA into RNA using the four ribonucleoside triphosphates as substrates. The protein is DNA-directed RNA polymerase subunit alpha of Treponema pallidum (strain Nichols).